The following is a 173-amino-acid chain: NADH-ubiquinone oxidoreductase chain 6 (173 aa).

6 helical membrane-spanning segments follow: residues M1 to S21, Y27 to G47, V48 to V68, W85 to G105, G106 to V126, and C139 to L159.

This sequence belongs to the complex I subunit 6 family.

It is found in the mitochondrion membrane. The catalysed reaction is a ubiquinone + NADH + 5 H(+)(in) = a ubiquinol + NAD(+) + 4 H(+)(out). Functionally, core subunit of the mitochondrial membrane respiratory chain NADH dehydrogenase (Complex I) that is believed to belong to the minimal assembly required for catalysis. Complex I functions in the transfer of electrons from NADH to the respiratory chain. The immediate electron acceptor for the enzyme is believed to be ubiquinone. In Aethia psittacula (Parakeet auklet), this protein is NADH-ubiquinone oxidoreductase chain 6 (MT-ND6).